We begin with the raw amino-acid sequence, 227 residues long: 7-cyano-7-deazaguanine synthase (227 aa).

7-17 provides a ligand contact to ATP; it reads VSGGMDSLVAT. Positions 187, 195, 198, and 201 each coordinate Zn(2+).

It belongs to the QueC family. Zn(2+) serves as cofactor.

It catalyses the reaction 7-carboxy-7-deazaguanine + NH4(+) + ATP = 7-cyano-7-deazaguanine + ADP + phosphate + H2O + H(+). It functions in the pathway purine metabolism; 7-cyano-7-deazaguanine biosynthesis. Functionally, catalyzes the ATP-dependent conversion of 7-carboxy-7-deazaguanine (CDG) to 7-cyano-7-deazaguanine (preQ(0)). The polypeptide is 7-cyano-7-deazaguanine synthase (Chlorobaculum parvum (strain DSM 263 / NCIMB 8327) (Chlorobium vibrioforme subsp. thiosulfatophilum)).